Consider the following 410-residue polypeptide: Putative competence-damage inducible protein (410 aa).

It belongs to the CinA family.

This is Putative competence-damage inducible protein from Clostridium beijerinckii (strain ATCC 51743 / NCIMB 8052) (Clostridium acetobutylicum).